The chain runs to 148 residues: MMSATSLLVMNGPNLSRLGKREPEVYGSLTLDEINRGIAVAFPEVSFEFFQSEHEGALIEKLFEIEGRGGFSGVVLNAGALTHYSIALRDAISAVTMPVVEVHLSNVHKREEFRHKSVISAVCIGVIAGFGVESYHLGVRALLGRGNR.

Tyr-26 acts as the Proton acceptor in catalysis. 3 residues coordinate substrate: Asn-77, His-83, and Asp-90. His-103 (proton donor) is an active-site residue. Residues Leu-104–Ser-105 and Arg-114 contribute to the substrate site.

This sequence belongs to the type-II 3-dehydroquinase family. As to quaternary structure, homododecamer.

The enzyme catalyses 3-dehydroquinate = 3-dehydroshikimate + H2O. The protein operates within metabolic intermediate biosynthesis; chorismate biosynthesis; chorismate from D-erythrose 4-phosphate and phosphoenolpyruvate: step 3/7. Catalyzes a trans-dehydration via an enolate intermediate. In Chlorobaculum tepidum (strain ATCC 49652 / DSM 12025 / NBRC 103806 / TLS) (Chlorobium tepidum), this protein is 3-dehydroquinate dehydratase.